Reading from the N-terminus, the 242-residue chain is UPF0309 protein BMEA_B0892 (242 aa).

An SIS domain is found at 30–214; sequence AADLIAAAAR…ARLVGEGDAP (185 aa).

Belongs to the UPF0309 family.

This is UPF0309 protein BMEA_B0892 from Brucella melitensis biotype 2 (strain ATCC 23457).